The primary structure comprises 424 residues: MFRLSSGLLKGGACASRSRIPQLGRSLYSTATSAGADKTQGKIHTVIGAVVDVQFNHGRLPPILNALETTNQGKKLVLEVAQHLGEHTVRCIAMDGTEGLVRGTAVADTGNPIMVPVGPATLGRIMNVTGDPIDERGPIEGVRLMPIHTEPPAYTEQSTHAEILVTGIKVVDLLAPYARGGKIGLFGGAGVGKTVFIQELINNIAKAHGGYSVFTGVGERTREGNDLYHEMQETGVIKLDGDSKVALVFGQMNEPPGARARVALTGLTIAEYFRDEGQDVLLFIDNIFRFTQAGSEVSALLGRIPSAVGYQPTLAVDMGAMQERITTTTKGSITSVQAVYVPADDLTDPAPATTFIHLDATTELSRGISELGIYPAVDPLGSKSRLMDPRIVGEEHYDTAMRVQRTLQEYKSLQDIIAILAGVA.

A mitochondrion-targeting transit peptide spans 1 to 60; the sequence is MFRLSSGLLKGGACASRSRIPQLGRSLYSTATSAGADKTQGKIHTVIGAVVDVQFNHGRL. ATP-binding positions include 187–194, 188–195, 219–220, and Tyr-374; these read GGAGVGKT, GAGVGKTV, and ER.

The protein belongs to the ATPase alpha/beta chains family. In terms of assembly, F-type ATPases have 2 components, CF(1) - the catalytic core - and CF(0) - the membrane proton channel. CF(1) has five subunits: alpha(3), beta(3), gamma(1), delta(1), epsilon(1). CF(0) has three main subunits: a, b and c.

It localises to the mitochondrion. It is found in the mitochondrion inner membrane. It carries out the reaction ATP + H2O + 4 H(+)(in) = ADP + phosphate + 5 H(+)(out). ATP synthase subunit beta; part of the gene cluster that mediates the biosynthesis of citreoviridin, an inhibitor of the of F1-ATPase beta-subunit. Mitochondrial membrane ATP synthase (F(1)F(0) ATP synthase or Complex V) produces ATP from ADP in the presence of a proton gradient across the membrane which is generated by electron transport complexes of the respiratory chain. Whereas ctvA to ctvD constitute the core biosynthetic gene cluster, ctvE acts as a self-resistance gene. In Aspergillus terreus (strain NIH 2624 / FGSC A1156), this protein is ATP synthase subunit beta, mitochondrial.